Reading from the N-terminus, the 406-residue chain is MKRSHDSITRSINSDNDSETNMNSDNNNNNKPNQRKKINLNKKPSIFFIFDDLTDYETENKETTTIPPICHGIHCDHDPNSCIVPIIPDKFNNMTRLNLDNLIELGELFHCKLQKNFRNIPLERLAILRESLLKLNKTIGMNSIKESICEQLIYFLMDLEPNPQEMLHTVIQGPPGVGKSYVIDILAEIYLKMGYLSNGKINKVKLDELKGKYIGHSAPLTQKAIDNSIGGVLVLDEVYAIGNSDHLDSFSKEVIDTINRNLTEKAGKFVCIIAGYGEQIDKCFFAHNEGLRSRFRFRFSIDSYTPEELFEIFKLKVENDKWKLSESEINLITDFFRFNRDKFPYFGRDIETLLFHTKVAHSNRIVYNDNSGLNKTINLLDIKQGFAKFSLNNKETSNNDFNLMYL.

Positions 1–37 are disordered; it reads MKRSHDSITRSINSDNDSETNMNSDNNNNNKPNQRKK. Positions 13–32 are enriched in low complexity; sequence NSDNDSETNMNSDNNNNNKP. Residue 173-180 participates in ATP binding; the sequence is GPPGVGKS.

The protein belongs to the CbxX/CfxQ family.

The polypeptide is Putative cfxQ-like protein R730 (Acanthamoeba polyphaga mimivirus (APMV)).